The chain runs to 206 residues: Octanoyltransferase (206 aa).

The 177-residue stretch at 30-206 (PETNDEIWLV…EFVTLLNNSI (177 aa)) folds into the BPL/LPL catalytic domain. Substrate is bound by residues 69–76 (RGGQVTYH), 137–139 (SLG), and 150–152 (GIA). Catalysis depends on Cys168, which acts as the Acyl-thioester intermediate.

This sequence belongs to the LipB family.

It localises to the cytoplasm. The enzyme catalyses octanoyl-[ACP] + L-lysyl-[protein] = N(6)-octanoyl-L-lysyl-[protein] + holo-[ACP] + H(+). It participates in protein modification; protein lipoylation via endogenous pathway; protein N(6)-(lipoyl)lysine from octanoyl-[acyl-carrier-protein]: step 1/2. In terms of biological role, catalyzes the transfer of endogenously produced octanoic acid from octanoyl-acyl-carrier-protein onto the lipoyl domains of lipoate-dependent enzymes. Lipoyl-ACP can also act as a substrate although octanoyl-ACP is likely to be the physiological substrate. The sequence is that of Octanoyltransferase from Francisella tularensis subsp. mediasiatica (strain FSC147).